Reading from the N-terminus, the 525-residue chain is Protein shisa-6 (525 aa).

The first 30 residues, 1 to 30, serve as a signal peptide directing secretion; the sequence is MALRRLLLPPLLLSLLLSLASLHLPPGADA. Over 31 to 180 the chain is Extracellular; sequence ARGRSGNRTL…NKYDPEKDKT (150 aa). N-linked (GlcNAc...) asparagine glycosylation is found at N37 and N62. The chain crosses the membrane as a helical span at residues 181 to 201; sequence NFTVYITCGVIAFVIVAGVFA. At 202–525 the chain is on the cytoplasmic side; that stretch reads KVSYDKAHRP…YTASKTEVTV (324 aa). The tract at residues 241–294 is disordered; it reads ISAIDTSPKENTPVRSTSKNHYTPVRTAKQTPGDRQYNHPILSSATQTPTHEKP. The span at 243-261 shows a compositional bias: polar residues; that stretch reads AIDTSPKENTPVRSTSKNH. A phosphoserine mark is found at S416, S422, and S434. T458 carries the post-translational modification Phosphothreonine. Residues 469 to 495 form a disordered region; it reads MHSHPSASNNSYATLGQSQTAAKRHAF. Over residues 473-489 the composition is skewed to polar residues; it reads PSASNNSYATLGQSQTA. Phosphothreonine is present on T502. The short motif at 522–525 is the PDZ-binding element; sequence EVTV.

The protein belongs to the shisa family. As to quaternary structure, component of the postsynaptic hippocampal AMPA-type glutamate receptor (AMPAR) complex, at least composed of pore forming AMPAR subunits GRIA1, GRIA2 and GRIA3 and AMPAR auxiliary proteins SHISA6 and SHISA7. Interacts (via PDZ-binding motif) with DLG4/PSD-95 (via PDZ domain); the interaction is direct. Post-translationally, N-glycosylated. Highly expressed in cerebellum and hippocampal neurons: CA1 stratum oriens and stratum radiatum, CA3 stratum oriens and stratum lucidum, and the dentate gyrus polymorphic layer. Expressed in other brain structures including olfactory bulb, cortex, amygdala and midbrain (at protein level). Also expressed in a subset of spermatogonial stem cells. Also expressed in eye, heart, kidney, lung, muscle and spleen. Isoform 2: Specifically expressed in hippocampus.

It localises to the postsynaptic density membrane. In terms of biological role, involved in maintenance of high-frequency synaptic transmission at hippocampal CA3-CA1 synapses. Regulates AMPA-type glutamate receptor (AMPAR) immobilization at postsynaptic density keeping the channels in an activated state in the presence of glutamate and preventing synaptic depression. May play a role in self-renewal and differentiation of spermatogonial stem cells by inhibiting canonical Wnt signaling pathway. The chain is Protein shisa-6 from Mus musculus (Mouse).